The chain runs to 125 residues: Nuclear envelope phosphatase-regulatory subunit 1 (125 aa).

N-acetylmethionine is present on methionine 1. The next 2 membrane-spanning stretches (helical) occupy residues 33–53 (MLLI…LIDP) and 65–85 (WNHP…FAGI).

It belongs to the CNEP1R1 family. In terms of assembly, interacts with CTDNEP1; the complex dephosphorylates LPIN1 and LPIN2.

It is found in the nucleus membrane. It localises to the cytoplasm. In terms of biological role, forms with the serine/threonine protein phosphatase CTDNEP1 an active complex which dephosphorylates and may activate LPIN1 and LPIN2. LPIN1 and LPIN2 are phosphatidate phosphatases that catalyze the conversion of phosphatidic acid to diacylglycerol and control the metabolism of fatty acids at different levels. May indirectly modulate the lipid composition of nuclear and/or endoplasmic reticulum membranes and be required for proper nuclear membrane morphology and/or dynamics. May also indirectly regulate the production of lipid droplets and triacylglycerol. This chain is Nuclear envelope phosphatase-regulatory subunit 1 (CNEP1R1), found in Bos taurus (Bovine).